The sequence spans 162 residues: UPF0114 protein Psyr_4257 (162 aa).

4 helical membrane-spanning segments follow: residues 15–35, 53–73, 109–129, and 136–156; these read LLAP…LKFF, LILV…LVMV, VAAS…MDAT, and LMWY…MGYL.

The protein belongs to the UPF0114 family.

It is found in the cell membrane. The polypeptide is UPF0114 protein Psyr_4257 (Pseudomonas syringae pv. syringae (strain B728a)).